We begin with the raw amino-acid sequence, 767 residues long: Cullin-1 (767 aa).

Residues 699–760 (DRKLLLQSAI…EKEYLERQGR (62 aa)) form the Cullin neddylation domain. Residue Lys-713 forms a Glycyl lysine isopeptide (Lys-Gly) (interchain with G-Cter in NEDD8) linkage.

Belongs to the cullin family. Component of multiple Cul1-RING E3 ubiquitin-protein ligase complexes commonly known as SCF (SKP1-CUL1-F-box) complexes, consisting of cul1, skp1, pip1 and a variable F-box domain-containing protein as substrate-specific subunit. Binds to the pop1 homodimer, the pop2 homodimer and the pop1/pop2 heterodimer forming the SCF(pop1-pop2) complex. Interacts with pof3, pof14 and skp1. Neddylated; enhancing the ubiquitin-ligase activity.

It is found in the cytoplasm. The protein operates within protein modification; protein ubiquitination. Its function is as follows. Core component of multiple cullin-RING-based SCF (SKP1-CUL1-F-box protein) E3 ubiquitin-protein ligase complexes, which mediate the ubiquitination of target proteins. The functional specificity of the SCF complex depends on the F-box protein as substrate recognition component. SCF(pop1-pop2) is required for the maintenance of ploidy and directs ubiquitination of cig2. This is Cullin-1 (cul1) from Schizosaccharomyces pombe (strain 972 / ATCC 24843) (Fission yeast).